A 247-amino-acid polypeptide reads, in one-letter code: MYTVKLEIFEGPFDLLFHLIEKNEIDLMDIPISIILDQYMEYIRSLQEMDLDVASEFIVMAATLVEIKSRMLLPKFRLEEEAEKIEEDPREELVKQLIEYKKYKEIAQLLSGICGINRRFFKEEPDLNYIDKRVALNYSVEDIVNVYRKILERNKEKENKIEIKKEEYTVVSKIKELLTYLVKKPALWFSEIVRKSRSKLEVVVSFVALLELIKLNRVAAEQQTAYGDIFIRFLGREGRKHDPGRQD.

The protein belongs to the ScpA family. In terms of assembly, component of a cohesin-like complex composed of ScpA, ScpB and the Smc homodimer, in which ScpA and ScpB bind to the head domain of Smc. The presence of the three proteins is required for the association of the complex with DNA.

Its subcellular location is the cytoplasm. Its function is as follows. Participates in chromosomal partition during cell division. May act via the formation of a condensin-like complex containing Smc and ScpB that pull DNA away from mid-cell into both cell halves. The sequence is that of Segregation and condensation protein A from Caldanaerobacter subterraneus subsp. tengcongensis (strain DSM 15242 / JCM 11007 / NBRC 100824 / MB4) (Thermoanaerobacter tengcongensis).